Reading from the N-terminus, the 316-residue chain is N-acetylmuramic acid 6-phosphate etherase (316 aa).

The tract at residues 1 to 24 (MTRFQSDAAVSADRGHLMTEQPNP) is disordered. Residues 66–229 (IASRLKDGGR…STAVMVRLGK (164 aa)) form the SIS domain. The active-site Proton donor is the Glu94. Glu125 is an active-site residue.

It belongs to the GCKR-like family. MurNAc-6-P etherase subfamily. As to quaternary structure, homodimer.

The catalysed reaction is N-acetyl-D-muramate 6-phosphate + H2O = N-acetyl-D-glucosamine 6-phosphate + (R)-lactate. It participates in amino-sugar metabolism; N-acetylmuramate degradation. Specifically catalyzes the cleavage of the D-lactyl ether substituent of MurNAc 6-phosphate, producing GlcNAc 6-phosphate and D-lactate. The polypeptide is N-acetylmuramic acid 6-phosphate etherase (Parasynechococcus marenigrum (strain WH8102)).